The sequence spans 84 residues: MSLLDFFRSRKSQNSASIAKERLQIIVAHERGQRAQPDYLPQLQKDLLEVIRKYVPIDQEQIQVELENQGNCSILELNITLPDR.

It belongs to the MinE family.

In terms of biological role, prevents the cell division inhibition by proteins MinC and MinD at internal division sites while permitting inhibition at polar sites. This ensures cell division at the proper site by restricting the formation of a division septum at the midpoint of the long axis of the cell. This Pseudomonas aeruginosa (strain LESB58) protein is Cell division topological specificity factor.